Consider the following 36-residue polypeptide: Protein usd (36 aa).

Functionally, required for translation of SpoIIID. The polypeptide is Protein usd (usd) (Bacillus subtilis (strain 168)).